The chain runs to 469 residues: 3-isopropylmalate dehydratase large subunit 2 (469 aa).

[4Fe-4S] cluster is bound by residues C347, C408, and C411.

This sequence belongs to the aconitase/IPM isomerase family. LeuC type 1 subfamily. Heterodimer of LeuC and LeuD. The cofactor is [4Fe-4S] cluster.

The enzyme catalyses (2R,3S)-3-isopropylmalate = (2S)-2-isopropylmalate. It participates in amino-acid biosynthesis; L-leucine biosynthesis; L-leucine from 3-methyl-2-oxobutanoate: step 2/4. Its function is as follows. Catalyzes the isomerization between 2-isopropylmalate and 3-isopropylmalate, via the formation of 2-isopropylmaleate. This Mannheimia succiniciproducens (strain KCTC 0769BP / MBEL55E) protein is 3-isopropylmalate dehydratase large subunit 2.